The sequence spans 350 residues: MIKVLIVEDSPVVRELLSHILHSDPQIRVVGVAESGEEALKEVVRLRPDLITMDVNLPRMDGFETTRRIMEEIPTPIIIVSAAWVSTEVEKTFRALEAGALAVLEKPSIAARDYDIRARDLIRAVKAMSEVKVIRRWSRSPRIEPAPPASGEPDIGKITKRFEVVAMGASTGGPTVLKQILSDLPDNFTIPILIVQHMTQGFIPGFVDWLSRAANYPVSVAVHGEEIRPGHAYVAPDGLHMGVNALGKIILTKGEPENGLCPSVSYLFRSVYRAYGENAVGVLLTGMGKDGAYELKVMKDCGMITIAQNKETSVVYGMPGEAIGMNAASYVLPPEKIARVLVKLAGSVAP.

A Response regulatory domain is found at 3-121 (KVLIVEDSPV…RDYDIRARDL (119 aa)). Asp-54 carries the 4-aspartylphosphate modification. A CheB-type methylesterase domain is found at 148-342 (PASGEPDIGK…PPEKIARVLV (195 aa)). Residues Ser-170, His-197, and Asp-290 contribute to the active site.

This sequence belongs to the CheB family. In terms of processing, phosphorylated by CheA. Phosphorylation of the N-terminal regulatory domain activates the methylesterase activity.

It localises to the cytoplasm. The enzyme catalyses [protein]-L-glutamate 5-O-methyl ester + H2O = L-glutamyl-[protein] + methanol + H(+). It carries out the reaction L-glutaminyl-[protein] + H2O = L-glutamyl-[protein] + NH4(+). In terms of biological role, involved in chemotaxis. Part of a chemotaxis signal transduction system that modulates chemotaxis in response to various stimuli. Catalyzes the demethylation of specific methylglutamate residues introduced into the chemoreceptors (methyl-accepting chemotaxis proteins or MCP) by CheR. Also mediates the irreversible deamidation of specific glutamine residues to glutamic acid. The sequence is that of Protein-glutamate methylesterase/protein-glutamine glutaminase 1 from Syntrophus aciditrophicus (strain SB).